The primary structure comprises 213 residues: 3-isopropylmalate dehydratase small subunit (213 aa).

It belongs to the LeuD family. LeuD type 1 subfamily. Heterodimer of LeuC and LeuD.

The enzyme catalyses (2R,3S)-3-isopropylmalate = (2S)-2-isopropylmalate. The protein operates within amino-acid biosynthesis; L-leucine biosynthesis; L-leucine from 3-methyl-2-oxobutanoate: step 2/4. Catalyzes the isomerization between 2-isopropylmalate and 3-isopropylmalate, via the formation of 2-isopropylmaleate. This Aromatoleum aromaticum (strain DSM 19018 / LMG 30748 / EbN1) (Azoarcus sp. (strain EbN1)) protein is 3-isopropylmalate dehydratase small subunit.